We begin with the raw amino-acid sequence, 109 residues long: MNKKYLLTFLLTAYCATFLRFYFKNNFVISIIGSFLYGFFISRKISKSKKEILFSGFFACFTSFSGFVHFLYQFIIQGYYLKLFIYLNVIVILNLIIMYIGFQLSRKIT.

3 helical membrane-spanning segments follow: residues 21–41 (FYFK…GFFI), 52–72 (ILFS…HFLY), and 83–103 (LFIY…IGFQ).

This sequence belongs to the fluoride channel Fluc/FEX (TC 1.A.43) family.

The protein localises to the cell inner membrane. It carries out the reaction fluoride(in) = fluoride(out). Its function is as follows. Fluoride-specific ion channel. Important for reducing fluoride concentration in the cell, thus reducing its toxicity. This chain is Fluoride-specific ion channel FluC 1, found in Prochlorococcus marinus subsp. pastoris (strain CCMP1986 / NIES-2087 / MED4).